The primary structure comprises 367 residues: Phosphoribosylaminoimidazole-succinocarboxamide synthase (367 aa).

Belongs to the SAICAR synthetase family.

It carries out the reaction 5-amino-1-(5-phospho-D-ribosyl)imidazole-4-carboxylate + L-aspartate + ATP = (2S)-2-[5-amino-1-(5-phospho-beta-D-ribosyl)imidazole-4-carboxamido]succinate + ADP + phosphate + 2 H(+). It functions in the pathway purine metabolism; IMP biosynthesis via de novo pathway; 5-amino-1-(5-phospho-D-ribosyl)imidazole-4-carboxamide from 5-amino-1-(5-phospho-D-ribosyl)imidazole-4-carboxylate: step 1/2. The chain is Phosphoribosylaminoimidazole-succinocarboxamide synthase from Aliivibrio salmonicida (strain LFI1238) (Vibrio salmonicida (strain LFI1238)).